A 409-amino-acid chain; its full sequence is Spermatogenesis-associated protein 2-like protein (409 aa).

Disordered stretches follow at residues 233–257 (EDEGSDEASLYGGPSPGPDSPTSEL), 270–299 (LWGAGGGPWEPAEVSSPTSGASEEEEPQPE), and 313–337 (RPGDLAPPHAPRSPEQASPPPIPEP).

The protein belongs to the SPATA2 family.

This is Spermatogenesis-associated protein 2-like protein (SPATA2L) from Bos taurus (Bovine).